A 123-amino-acid polypeptide reads, in one-letter code: Small ribosomal subunit protein uS12cz/uS12cy (123 aa).

Belongs to the universal ribosomal protein uS12 family. In terms of assembly, part of the 30S ribosomal subunit.

The protein localises to the plastid. It localises to the chloroplast. In terms of biological role, with S4 and S5 plays an important role in translational accuracy. Located at the interface of the 30S and 50S subunits. This Populus alba (White poplar) protein is Small ribosomal subunit protein uS12cz/uS12cy (rps12-A).